The primary structure comprises 175 residues: Isopentenyl-diphosphate Delta-isomerase (175 aa).

Positions 22 and 29 each coordinate Mn(2+). A Nudix hydrolase domain is found at 27–160 (KLHRAFSVLL…PAAYTPWLAE (134 aa)). The active site involves cysteine 64. Cysteine 64 serves as a coordination point for Mg(2+). Residue histidine 66 coordinates Mn(2+). Residue glutamate 84 coordinates Mg(2+). 2 residues coordinate Mn(2+): glutamate 110 and glutamate 112. Glutamate 112 is a catalytic residue.

The protein belongs to the IPP isomerase type 1 family. Mg(2+) is required as a cofactor. Requires Mn(2+) as cofactor.

Its subcellular location is the cytoplasm. It catalyses the reaction isopentenyl diphosphate = dimethylallyl diphosphate. Its pathway is isoprenoid biosynthesis; dimethylallyl diphosphate biosynthesis; dimethylallyl diphosphate from isopentenyl diphosphate: step 1/1. In terms of biological role, catalyzes the 1,3-allylic rearrangement of the homoallylic substrate isopentenyl (IPP) to its highly electrophilic allylic isomer, dimethylallyl diphosphate (DMAPP). The chain is Isopentenyl-diphosphate Delta-isomerase from Nocardia farcinica (strain IFM 10152).